The sequence spans 304 residues: MTTRQVEHEYTIGAPAATVYRLLADVSHWPQIFPPTIHVERQATGAHQERIHIWATANGQAKNWTSRRTLDPEALRIDSASEVTTAPVAAMGGTWIVEPLGADSSRIRLLHDSGPSPRPQDLQWIDRAVDTTRHLELAALATTSNHAHAAEERELLSFTDTCTIDGAAKDVFDFVNEADRWPERLPHVATVRFEEPAPGLQILEMDTRAKDGSVHTTKSYRVALDTRKIAYKQVTLPALMTLHTGVWTFTRRPGHHRGELAAHRLHQHANIAKIPRRAGQVADARDYVHSALSTNSRAPWASQG.

Its pathway is antifungal biosynthesis; monensin biosynthesis. Functionally, is needed for correct cyclization of the oligoketide leading to isochromanequinone formation. This is Granaticin polyketide synthase bifunctional cyclase/dehydratase from Streptomyces virginiae (Streptomyces cinnamonensis).